The following is a 265-amino-acid chain: Mlc titration factor A (265 aa).

Zn(2+)-binding residues include His111, His148, His152, and Glu211.

Belongs to the MtfA family. In terms of assembly, interacts with Mlc. It depends on Zn(2+) as a cofactor.

It is found in the cytoplasm. In terms of biological role, involved in the modulation of the activity of the glucose-phosphotransferase system (glucose-PTS). Interacts with the transcriptional repressor Mlc, preventing its interaction with DNA and leading to the modulation of expression of genes regulated by Mlc, including ptsG, which encodes the PTS system glucose-specific EIICB component. Shows zinc-dependent metallopeptidase activity. The chain is Mlc titration factor A from Salmonella gallinarum (strain 287/91 / NCTC 13346).